Here is a 316-residue protein sequence, read N- to C-terminus: Ribosomal RNA small subunit methyltransferase H (316 aa).

S-adenosyl-L-methionine is bound by residues G42–H44, D62, F86, D104, and Q111.

Belongs to the methyltransferase superfamily. RsmH family.

Its subcellular location is the cytoplasm. The catalysed reaction is cytidine(1402) in 16S rRNA + S-adenosyl-L-methionine = N(4)-methylcytidine(1402) in 16S rRNA + S-adenosyl-L-homocysteine + H(+). In terms of biological role, specifically methylates the N4 position of cytidine in position 1402 (C1402) of 16S rRNA. The protein is Ribosomal RNA small subunit methyltransferase H of Polynucleobacter asymbioticus (strain DSM 18221 / CIP 109841 / QLW-P1DMWA-1) (Polynucleobacter necessarius subsp. asymbioticus).